We begin with the raw amino-acid sequence, 259 residues long: Pyrroloquinoline-quinone synthase (259 aa).

Belongs to the PqqC family.

The enzyme catalyses 6-(2-amino-2-carboxyethyl)-7,8-dioxo-1,2,3,4,7,8-hexahydroquinoline-2,4-dicarboxylate + 3 O2 = pyrroloquinoline quinone + 2 H2O2 + 2 H2O + H(+). It functions in the pathway cofactor biosynthesis; pyrroloquinoline quinone biosynthesis. Functionally, ring cyclization and eight-electron oxidation of 3a-(2-amino-2-carboxyethyl)-4,5-dioxo-4,5,6,7,8,9-hexahydroquinoline-7,9-dicarboxylic-acid to PQQ. The chain is Pyrroloquinoline-quinone synthase from Bradyrhizobium diazoefficiens (strain JCM 10833 / BCRC 13528 / IAM 13628 / NBRC 14792 / USDA 110).